Here is a 134-residue protein sequence, read N- to C-terminus: Profilin-2 (134 aa).

An intrachain disulfide couples C13 to C118. Positions 84 to 100 (AVIRGKKGSGGITIKKT) match the Involved in PIP2 interaction motif. T114 is subject to Phosphothreonine.

This sequence belongs to the profilin family. In terms of assembly, occurs in many kinds of cells as a complex with monomeric actin in a 1:1 ratio. Post-translationally, phosphorylated by MAP kinases.

Its subcellular location is the cytoplasm. It is found in the cytoskeleton. In terms of biological role, binds to actin and affects the structure of the cytoskeleton. At high concentrations, profilin prevents the polymerization of actin, whereas it enhances it at low concentrations. In Olea europaea (Common olive), this protein is Profilin-2.